A 1485-amino-acid polypeptide reads, in one-letter code: Putative E3 ubiquitin-protein ligase LIN-1 (1485 aa).

Over residues 337–353 (EENEDDSDSELENESVD) the composition is skewed to acidic residues. Disordered regions lie at residues 337 to 363 (EENEDDSDSELENESVDSDDKNNIFSP) and 384 to 417 (NQIPSPDIFSPLDSPRTAPNNSSPNPDMHSKRDS). The U-box domain occupies 510–585 (KPPKDFVCPI…TSWKEQNPEL (76 aa)). WD repeat units lie at residues 1204-1241 (SSNGEVLSMVYLNGQVLSGHTDGTIKVWDARKRIPRVI), 1246-1283 (EHTKAVTSLCSSGDRLYSGSLDKTIRVWTIKSDGIKCI), 1409-1448 (SLSTGLDIHRIAINSDFIFAGTKFGTIEVWLKDKFTRVAS), and 1454-1485 (GHTKITSLVSDVDGMMLFVGSSDGKIQVWALD).

As to expression, expressed in roots and nodules, and at very low levels in calli and seedling shoots.

The catalysed reaction is S-ubiquitinyl-[E2 ubiquitin-conjugating enzyme]-L-cysteine + [acceptor protein]-L-lysine = [E2 ubiquitin-conjugating enzyme]-L-cysteine + N(6)-ubiquitinyl-[acceptor protein]-L-lysine.. It functions in the pathway protein modification; protein ubiquitination. Its function is as follows. Putative E3 ubiquitin-protein ligase involved in the rhizobial infection process. Plays an important role in the early steps of infection thread formation and in growth and differentiation of nodules. The chain is Putative E3 ubiquitin-protein ligase LIN-1 from Lotus japonicus (Lotus corniculatus var. japonicus).